A 297-amino-acid polypeptide reads, in one-letter code: 4-hydroxy-tetrahydrodipicolinate synthase (297 aa).

T45 is a pyruvate binding site. Y133 acts as the Proton donor/acceptor in catalysis. K161 serves as the catalytic Schiff-base intermediate with substrate. Position 205 (I205) interacts with pyruvate.

The protein belongs to the DapA family. As to quaternary structure, homotetramer; dimer of dimers.

It localises to the cytoplasm. It carries out the reaction L-aspartate 4-semialdehyde + pyruvate = (2S,4S)-4-hydroxy-2,3,4,5-tetrahydrodipicolinate + H2O + H(+). It participates in amino-acid biosynthesis; L-lysine biosynthesis via DAP pathway; (S)-tetrahydrodipicolinate from L-aspartate: step 3/4. Its function is as follows. Catalyzes the condensation of (S)-aspartate-beta-semialdehyde [(S)-ASA] and pyruvate to 4-hydroxy-tetrahydrodipicolinate (HTPA). The protein is 4-hydroxy-tetrahydrodipicolinate synthase of Dichelobacter nodosus (strain VCS1703A).